Reading from the N-terminus, the 213-residue chain is AN1-type zinc finger protein 5 (213 aa).

The A20-type zinc finger occupies 8–42; that stretch reads TPGPMLCSTGCGFYGNPRTNGMCSVCYKEHLQRQQ. Positions 14, 18, 30, and 33 each coordinate Zn(2+). Positions 39-149 are disordered; the sequence is QRQQNSGRMS…EEKAPELPKP (111 aa). Residues 40–75 are compositionally biased toward polar residues; that stretch reads RQQNSGRMSPMGTASGSNSPTSDSASVQRADTSLNN. Ser48 and Ser58 each carry phosphoserine. A compositionally biased stretch (low complexity) spans 120–138; the sequence is SEPVVTQPSPSVSQPSTSQ. Residues 139-148 show a composition bias toward basic and acidic residues; the sequence is SEEKAPELPK. The segment at 148–194 adopts an AN1-type zinc-finger fold; it reads KPKKNRCFMCRKKVGLTGFDCRCGNLFCGLHRYSDKHNCPYDYKAEA. Zn(2+) is bound by residues Cys154, Cys157, Cys168, Cys170, Cys175, His178, His184, and Cys186. The residue at position 209 (Lys209) is an N6-acetyllysine.

As to quaternary structure, interacts with ubiquitin and polyubiquitinated proteins. Identified in a heterotrimeric complex with ubiquitin and SQSTM1, where ZFAND5 and SQSTM1 both interact with the same ubiquitin molecule. Homooligomer and/or heterooligomer. Interacts (via A20-type domain) with IKBKG and RIPK1 and with TRAF6 (via AN1-type domain). As to expression, highly expressed in skeletal muscle. Expressed in fetal cochlea. Also expressed in infant brain, fetal heart, pancreatic islet, melanocyte, pineal gland, placenta, corneal stroma, and parathyroid tumor. Weakly expressed or undetectable in adult brain, heart, colon, thymus, spleen, kidney, liver, small intestine, placenta, lung and peripheral blood leukocytes. Expressed in rhabdomyosarcoma RD cells (at protein level).

It localises to the cytoplasm. Involved in protein degradation via the ubiquitin-proteasome system. May act by anchoring ubiquitinated proteins to the proteasome. Plays a role in ubiquitin-mediated protein degradation during muscle atrophy. Plays a role in the regulation of NF-kappa-B activation and apoptosis. Inhibits NF-kappa-B activation triggered by overexpression of RIPK1 and TRAF6 but not of RELA. Also inhibits tumor necrosis factor (TNF), IL-1 and TLR4-induced NF-kappa-B activation in a dose-dependent manner. Overexpression sensitizes cells to TNF-induced apoptosis. Is a potent inhibitory factor for osteoclast differentiation. In Homo sapiens (Human), this protein is AN1-type zinc finger protein 5 (ZFAND5).